The chain runs to 109 residues: Ig kappa chain V region S211 (109 aa).

The tract at residues 1–23 (DVQMTQSPSYLAASPGESVSISC) is framework-1. Residues 24–35 (KASNKSISNNLA) are complementarity-determining-1. The tract at residues 36–50 (WYZZKPGKANKLLIS) is framework-2. The tract at residues 51-57 (SGSTLQS) is complementarity-determining-2. The interval 58–89 (GTPSRFSGSGSDTDFTLTIRSLEFQDFAVYYC) is framework-3. The interval 90–98 (ZZYNEPYYT) is complementarity-determining-3. The framework-4 stretch occupies residues 99-108 (FGAGTMLELK).

The protein is Ig kappa chain V region S211 of Rattus norvegicus (Rat).